Here is an 89-residue protein sequence, read N- to C-terminus: Large ribosomal subunit protein bL27 (89 aa).

The segment at 1–21 (MAHKKSGGSSRNGRDSNPKYL) is disordered.

It belongs to the bacterial ribosomal protein bL27 family.

In Hyphomonas neptunium (strain ATCC 15444), this protein is Large ribosomal subunit protein bL27.